Reading from the N-terminus, the 145-residue chain is DnaJ homolog subfamily B member 3 (145 aa).

Residues 1 to 69 (MVDYYEVLDV…KKRDIYDRYG (69 aa)) form the J domain.

Expressed in sperm (at protein level).

Functionally, may operate as a co-chaperone of the male germ cell- and haploid stage-specific Hsp70 proteins. This is DnaJ homolog subfamily B member 3 (DNAJB3) from Homo sapiens (Human).